The primary structure comprises 282 residues: MPKTQFQVDQNAVKKALHAAARTYDNVGMVPKAIADRLLERLDFIRLNPLCVVDVGARTGYATQQLEERYREAIVVGLDFSVAILKAASSKMMVGEYTALPFADRSVDLIFSNLAFQWSSDLQQTLQECHRVLKPGGLLLFSTVGPDTLKELHSSFADGHRHVHPFYDMHDIGDMLTQLRFTDPVMDTERLIVHYSSVPQLIKDLKQLGAQNASQDRLKGLMGKTQWRQMLTNYENCREENGALPATVEVIYGHAFGTESNSFKNANGEEVTVPIDKIIRRN.

The protein belongs to the methyltransferase superfamily.

It catalyses the reaction malonyl-[ACP] + S-adenosyl-L-methionine = malonyl-[ACP] methyl ester + S-adenosyl-L-homocysteine. Its pathway is cofactor biosynthesis; biotin biosynthesis. Its function is as follows. Converts the free carboxyl group of a malonyl-thioester to its methyl ester by transfer of a methyl group from S-adenosyl-L-methionine (SAM). It allows to synthesize pimeloyl-ACP via the fatty acid synthetic pathway. The protein is Malonyl-[acyl-carrier protein] O-methyltransferase 1 of Coxiella burnetii (strain RSA 493 / Nine Mile phase I).